Reading from the N-terminus, the 74-residue chain is ATP synthase subunit c (74 aa).

The next 2 membrane-spanning stretches (helical) occupy residues 8-28 and 52-72; these read FIGIGLMAIGMYGAALGVSNI and IGAGLAEAMGLFSFVIAMLLI.

It belongs to the ATPase C chain family. As to quaternary structure, F-type ATPases have 2 components, F(1) - the catalytic core - and F(0) - the membrane proton channel. F(1) has five subunits: alpha(3), beta(3), gamma(1), delta(1), epsilon(1). F(0) has three main subunits: a(1), b(2) and c(10-14). The alpha and beta chains form an alternating ring which encloses part of the gamma chain. F(1) is attached to F(0) by a central stalk formed by the gamma and epsilon chains, while a peripheral stalk is formed by the delta and b chains.

Its subcellular location is the cell inner membrane. In terms of biological role, f(1)F(0) ATP synthase produces ATP from ADP in the presence of a proton or sodium gradient. F-type ATPases consist of two structural domains, F(1) containing the extramembraneous catalytic core and F(0) containing the membrane proton channel, linked together by a central stalk and a peripheral stalk. During catalysis, ATP synthesis in the catalytic domain of F(1) is coupled via a rotary mechanism of the central stalk subunits to proton translocation. Key component of the F(0) channel; it plays a direct role in translocation across the membrane. A homomeric c-ring of between 10-14 subunits forms the central stalk rotor element with the F(1) delta and epsilon subunits. The polypeptide is ATP synthase subunit c (Rickettsia felis (strain ATCC VR-1525 / URRWXCal2) (Rickettsia azadi)).